Here is a 557-residue protein sequence, read N- to C-terminus: Nucleoprotein (557 aa).

The interval 54-235 is binding site for the cap structure m7GTP; that stretch reads MRKDKRSDDD…ITKEESANNI (182 aa). Mn(2+)-binding residues include Asp379 and Glu381. Zn(2+)-binding residues include Glu389, Cys496, His499, and Cys518. Asp522 lines the Mn(2+) pocket.

The protein belongs to the arenaviridae nucleocapsid protein family. As to quaternary structure, homomultimerizes to form the nucleocapsid. Binds to viral genomic RNA. Interacts with glycoprotein G2. Interacts with protein Z; this interaction probably directs the encapsidated genome to budding sites. Interacts with protein L; this interaction does not interfere with Z-L interaction. Interacts with host IKBKE (via Protein kinase domain); the interaction inhibits IKBKE kinase activity.

The protein localises to the virion. It localises to the host cytoplasm. Functionally, encapsidates the genome, protecting it from nucleases. The encapsidated genomic RNA is termed the nucleocapsid (NC). Serves as template for viral transcription and replication. The increased presence of protein N in host cell does not seem to trigger the switch from transcription to replication as observed in other negative strain RNA viruses. Through the interaction with host IKBKE, strongly inhibits the phosphorylation and nuclear translocation of host IRF3, a protein involved in interferon activation pathway, leading to the inhibition of interferon-beta and IRF3-dependent promoters activation. Also encodes a functional 3'-5' exoribonuclease that degrades preferentially dsRNA substrates and thereby participates in the suppression of interferon induction. The polypeptide is Nucleoprotein (Calomys callosus (Large vesper mouse)).